Here is a 137-residue protein sequence, read N- to C-terminus: NADPH-dependent 7-cyano-7-deazaguanine reductase (137 aa).

Cys-50 serves as the catalytic Thioimide intermediate. The active-site Proton donor is the Asp-57. Substrate contacts are provided by residues 72 to 74 (VEL) and 91 to 92 (HE).

Belongs to the GTP cyclohydrolase I family. QueF type 1 subfamily.

It localises to the cytoplasm. It catalyses the reaction 7-aminomethyl-7-carbaguanine + 2 NADP(+) = 7-cyano-7-deazaguanine + 2 NADPH + 3 H(+). It participates in tRNA modification; tRNA-queuosine biosynthesis. In terms of biological role, catalyzes the NADPH-dependent reduction of 7-cyano-7-deazaguanine (preQ0) to 7-aminomethyl-7-deazaguanine (preQ1). The sequence is that of NADPH-dependent 7-cyano-7-deazaguanine reductase from Synechococcus sp. (strain CC9902).